Here is an 878-residue protein sequence, read N- to C-terminus: NUT family member 2B (878 aa).

Disordered regions lie at residues 273–324, 417–512, 527–560, 624–693, 709–757, and 775–878; these read WSQG…DDSC, QKSQ…PEEI, LLGPSLGATGEPEKQREEGKVKQPQEEDWTPPDP, PPLK…GMAR, LRAA…EEEE, and WLPQ…HCSQ. Pro residues-rich tracts occupy residues 278-288 and 427-444; these read PLPPPPPPAAQ and CLPPPATPRLEPRGPPAP. The segment covering 476 to 487 has biased composition (basic residues); it reads TKARRPPPRPHR. Over residues 537 to 551 the composition is skewed to basic and acidic residues; it reads EPEKQREEGKVKQPQ.

Belongs to the NUT family.

This is NUT family member 2B (NUTM2B) from Homo sapiens (Human).